The sequence spans 496 residues: MTIPAADDNNCPSYDKVIDLIVDYAYDYEIDSPAAWTRAKAALIDALGAAIESIHTSPECAAMIGPVWPQTATVPGGFRLPGTQFQVDALKGAFDLGGMIRYLDHNDAFPGAEWGHPSDNLGAILSTADILSREALARGSPEEVISMKQVLTALIKAYEIQGVFQIRNAFNKVGLDHVILVKVASSAMVSWLMGLSRDQARAVVSHAWADGHPLRVYRQAPNAGPRKGWAAGDACMRAVHLANLVRCGQPGIRSAITTPRWGFYDVLYRGQTFELPRPFTSWVMETVLFKVSTAEGHGLTAVEAALTIAEKLAQRGLRPEEDIVNIRARTQEAGMIIINKKGPLHNAADRDHCLRYMVAVVLLKGSQITTADYQDSSPWARDPRVETLRSITTMEEDPSFTRDYHDPQCRSVANALEVTLRDGTKLEELVPFPLGHVRRPETLQLVREKAQQNLGLKLSSERVGQILDTVDQPKFEKMAASDFVDLFIPQPASSAA.

This sequence belongs to the PrpD family.

The protein operates within secondary metabolite biosynthesis. Functionally, 2-methylcitrate dehydratase-like protein; part of the gene cluster that mediates the biosynthesis of oryzines, natural products with an unusual maleidride backbone. The two subunits of the fungal fatty acid synthase oryfasA and oryfasB probably form octenoic acid. This fatty acid is most likely activated by the acyl-CoA ligase oryP to give octenyl-CoA before the citrate synthase-like protein oryE catalyzes condensation with oxaloacetate to form tricarboxylic acid. The next steps of the pathways are conjectural, but a favorite possible route has been proposed, beginning with decarboxylation and concomitant dehydration by the decarboxylase oryM, followed by tautomerization, which may lead to the production of a diene intermediate. Reduction of this diene intermediate could give the known metabolite piliformic acid. On the pathway to oryzine B and oryzine A, however, hydroxylation of the diene by the alpha-ketoglutarate-dependent dioxygenase oryG and lactonisation by the lactonohydrolases oryH or oryL could give oryzine B directly. Finally, enoyl reduction by the dehydrogenase oryD would then convert oryzine B into oryzine A. The polypeptide is 2-methylcitrate dehydratase-like protein oryR (Aspergillus oryzae (strain ATCC 42149 / RIB 40) (Yellow koji mold)).